Here is a 432-residue protein sequence, read N- to C-terminus: Histidinol dehydrogenase (432 aa).

3 residues coordinate NAD(+): Tyr-133, Gln-194, and Asn-217. Substrate-binding residues include Ser-240, Gln-262, and His-265. 2 residues coordinate Zn(2+): Gln-262 and His-265. Active-site proton acceptor residues include Glu-330 and His-331. His-331, Asp-364, Glu-418, and His-423 together coordinate substrate. Asp-364 is a binding site for Zn(2+). His-423 provides a ligand contact to Zn(2+).

It belongs to the histidinol dehydrogenase family. Requires Zn(2+) as cofactor.

It catalyses the reaction L-histidinol + 2 NAD(+) + H2O = L-histidine + 2 NADH + 3 H(+). It functions in the pathway amino-acid biosynthesis; L-histidine biosynthesis; L-histidine from 5-phospho-alpha-D-ribose 1-diphosphate: step 9/9. In terms of biological role, catalyzes the sequential NAD-dependent oxidations of L-histidinol to L-histidinaldehyde and then to L-histidine. This is Histidinol dehydrogenase from Nitrosomonas europaea (strain ATCC 19718 / CIP 103999 / KCTC 2705 / NBRC 14298).